The sequence spans 105 residues: Small ribosomal subunit protein uS10 (105 aa).

It belongs to the universal ribosomal protein uS10 family. Part of the 30S ribosomal subunit.

Functionally, involved in the binding of tRNA to the ribosomes. The chain is Small ribosomal subunit protein uS10 from Rickettsia akari (strain Hartford).